We begin with the raw amino-acid sequence, 377 residues long: Beta-lactamase (377 aa).

Positions 1–19 (MFKTTLCALLITASCSTFA) are cleaved as a signal peptide. The active-site Acyl-ester intermediate is Ser-80. Residues Ser-80, Gln-136, Tyr-166, Asn-168, Ala-334, and Asn-359 each contribute to the a beta-lactam site.

The protein belongs to the class-C beta-lactamase family. Monomer.

It localises to the periplasm. It carries out the reaction a beta-lactam + H2O = a substituted beta-amino acid. Inhibited by the beta-lactamase-blocking agents avibactam, enmetazobactam, relebactam, nacubactam, vaborbactam, taniborbactam, zidebactam, and beta-lactam-analog boronic acids, via a covalent binding to Ser-80. Inhibited by non-beta-lactam, benzo(b)thiophene-2-boronic acid (BZBTH2B) and various cyclic boronates. Not inhibited by clavulanic acid. Inhibited by O-aryloxycarbonyl hydroxamates, via cross-linking of the active site Ser-80 to Lys-331. Weakly inhibited by citric acid. Functionally, class C beta-lactamase which confers resistance to penicillins and cephalosporins. Has benzylpenicillin- and cephaloridine-hydrolyzing activity. Has weak cefuroxime, cefotaxime, cefoxitin and oxacillin-hydrolyzing activities. The sequence is that of Beta-lactamase from Escherichia coli (strain K12).